A 232-amino-acid chain; its full sequence is NAD(P)H-hydrate epimerase (232 aa).

The YjeF N-terminal domain maps to 9–219 (AISVDEELFN…KLQDKYAMEL (211 aa)). Residue 62 to 66 (NNGGD) coordinates (6S)-NADPHX. Residues asparagine 63 and aspartate 127 each coordinate K(+). Residues 131 to 137 (GFSFKPP) and aspartate 160 each bind (6S)-NADPHX. Residue serine 163 coordinates K(+).

This sequence belongs to the NnrE/AIBP family. K(+) serves as cofactor.

It catalyses the reaction (6R)-NADHX = (6S)-NADHX. It carries out the reaction (6R)-NADPHX = (6S)-NADPHX. Catalyzes the epimerization of the S- and R-forms of NAD(P)HX, a damaged form of NAD(P)H that is a result of enzymatic or heat-dependent hydration. This is a prerequisite for the S-specific NAD(P)H-hydrate dehydratase to allow the repair of both epimers of NAD(P)HX. This chain is NAD(P)H-hydrate epimerase, found in Aedes aegypti (Yellowfever mosquito).